The primary structure comprises 158 residues: Transcription elongation factor GreA (158 aa).

Positions 4–75 (EKTYPMTQEG…TQLENMIRNA (72 aa)) form a coiled coil.

This sequence belongs to the GreA/GreB family.

Functionally, necessary for efficient RNA polymerase transcription elongation past template-encoded arresting sites. The arresting sites in DNA have the property of trapping a certain fraction of elongating RNA polymerases that pass through, resulting in locked ternary complexes. Cleavage of the nascent transcript by cleavage factors such as GreA or GreB allows the resumption of elongation from the new 3'terminus. GreA releases sequences of 2 to 3 nucleotides. This is Transcription elongation factor GreA from Bacillus cereus (strain ATCC 10987 / NRS 248).